A 367-amino-acid chain; its full sequence is UDP-N-acetylglucosamine--N-acetylmuramyl-(pentapeptide) pyrophosphoryl-undecaprenol N-acetylglucosamine transferase (367 aa).

Residues 15-17, asparagine 126, arginine 169, serine 197, and glutamine 298 each bind UDP-N-acetyl-alpha-D-glucosamine; that span reads TGG.

The protein belongs to the glycosyltransferase 28 family. MurG subfamily.

Its subcellular location is the cell inner membrane. It carries out the reaction di-trans,octa-cis-undecaprenyl diphospho-N-acetyl-alpha-D-muramoyl-L-alanyl-D-glutamyl-meso-2,6-diaminopimeloyl-D-alanyl-D-alanine + UDP-N-acetyl-alpha-D-glucosamine = di-trans,octa-cis-undecaprenyl diphospho-[N-acetyl-alpha-D-glucosaminyl-(1-&gt;4)]-N-acetyl-alpha-D-muramoyl-L-alanyl-D-glutamyl-meso-2,6-diaminopimeloyl-D-alanyl-D-alanine + UDP + H(+). It participates in cell wall biogenesis; peptidoglycan biosynthesis. Its function is as follows. Cell wall formation. Catalyzes the transfer of a GlcNAc subunit on undecaprenyl-pyrophosphoryl-MurNAc-pentapeptide (lipid intermediate I) to form undecaprenyl-pyrophosphoryl-MurNAc-(pentapeptide)GlcNAc (lipid intermediate II). This is UDP-N-acetylglucosamine--N-acetylmuramyl-(pentapeptide) pyrophosphoryl-undecaprenol N-acetylglucosamine transferase from Bradyrhizobium sp. (strain BTAi1 / ATCC BAA-1182).